The primary structure comprises 131 residues: D-ribose pyranase (131 aa).

The Proton donor role is filled by His-20. Substrate contacts are provided by residues Asp-28, His-98, and 120-122 (YAN).

It belongs to the RbsD / FucU family. RbsD subfamily. In terms of assembly, homodecamer.

It localises to the cytoplasm. The enzyme catalyses beta-D-ribopyranose = beta-D-ribofuranose. It functions in the pathway carbohydrate metabolism; D-ribose degradation; D-ribose 5-phosphate from beta-D-ribopyranose: step 1/2. Functionally, catalyzes the interconversion of beta-pyran and beta-furan forms of D-ribose. The polypeptide is D-ribose pyranase (Bacillus cereus (strain G9842)).